The primary structure comprises 215 residues: Putative zinc finger protein ORF121 (215 aa).

An RING-type; degenerate zinc finger spans residues 53-105 (CVICMEPTYTKKTLAECDIEGGALRVTTMPCPTHYICDNCIRQEMEDKCPICR).

In Magallana gigas (Pacific oyster), this protein is Putative zinc finger protein ORF121.